Consider the following 186-residue polypeptide: Large ribosomal subunit protein uL5 (186 aa).

This sequence belongs to the universal ribosomal protein uL5 family. As to quaternary structure, part of the 50S ribosomal subunit; part of the 5S rRNA/L5/L18/L25 subcomplex. Contacts the 5S rRNA and the P site tRNA. Forms a bridge to the 30S subunit in the 70S ribosome.

In terms of biological role, this is one of the proteins that bind and probably mediate the attachment of the 5S RNA into the large ribosomal subunit, where it forms part of the central protuberance. In the 70S ribosome it contacts protein S13 of the 30S subunit (bridge B1b), connecting the 2 subunits; this bridge is implicated in subunit movement. Contacts the P site tRNA; the 5S rRNA and some of its associated proteins might help stabilize positioning of ribosome-bound tRNAs. This chain is Large ribosomal subunit protein uL5, found in Cereibacter sphaeroides (strain ATCC 17023 / DSM 158 / JCM 6121 / CCUG 31486 / LMG 2827 / NBRC 12203 / NCIMB 8253 / ATH 2.4.1.) (Rhodobacter sphaeroides).